The sequence spans 476 residues: Cysteine--tRNA ligase (476 aa).

Position 28 (cysteine 28) interacts with Zn(2+). A 'HIGH' region motif is present at residues 30–40 (PTVYDHTHLGH). Zn(2+) contacts are provided by cysteine 208, histidine 233, and glutamate 237. The short motif at 265-269 (KMSKS) is the 'KMSKS' region element. Lysine 268 provides a ligand contact to ATP.

The protein belongs to the class-I aminoacyl-tRNA synthetase family. Requires Zn(2+) as cofactor.

The protein resides in the cytoplasm. The catalysed reaction is tRNA(Cys) + L-cysteine + ATP = L-cysteinyl-tRNA(Cys) + AMP + diphosphate. This chain is Cysteine--tRNA ligase, found in Methanococcus maripaludis (strain C6 / ATCC BAA-1332).